Here is a 767-residue protein sequence, read N- to C-terminus: Photosystem I P700 chlorophyll a apoprotein A1 (767 aa).

Residues Met-1 to Ala-22 form a disordered region. Over residues Ser-8–Ala-22 the composition is skewed to basic and acidic residues. 8 consecutive transmembrane segments (helical) span residues Ile-76 to Ala-99, Leu-162 to His-185, Leu-201 to Ala-225, Val-309 to Tyr-327, Arg-368 to Tyr-391, Leu-407 to Val-433, Ala-455 to His-477, and Leu-558 to Leu-576. [4Fe-4S] cluster is bound by residues Cys-600 and Cys-609. The next 2 helical transmembrane spans lie at His-616–Trp-637 and Ile-681–Phe-703. A divinylchlorophyll a'-binding site is contributed by His-692. The divinyl chlorophyll a site is built by Met-700 and Tyr-708. Phylloquinone is bound at residue Trp-709. Residues Ala-741 to Ala-761 form a helical membrane-spanning segment.

It belongs to the PsaA/PsaB family. In terms of assembly, the PsaA/B heterodimer binds the P700 divinyl chlorophyll special pair and subsequent electron acceptors. PSI consists of a core antenna complex that captures photons, and an electron transfer chain that converts photonic excitation into a charge separation. The cyanobacterial PSI reaction center is composed of one copy each of PsaA,B,C,D,E,F,I,J,K,L,M and X, and forms trimeric complexes. PSI electron transfer chain: 5 divinyl chlorophyll a, 1 divinyl chlorophyll a', 2 phylloquinones and 3 4Fe-4S clusters. PSI core antenna: 90 divinyl chlorophyll a, 22 carotenoids, 3 phospholipids and 1 galactolipid. P700 is a divinyl chlorophyll a/divinyl chlorophyll a' dimer, A0 is one or more divinyl chlorophyll a, A1 is one or both phylloquinones and FX is a shared 4Fe-4S iron-sulfur center. is required as a cofactor.

It is found in the cellular thylakoid membrane. It carries out the reaction reduced [plastocyanin] + hnu + oxidized [2Fe-2S]-[ferredoxin] = oxidized [plastocyanin] + reduced [2Fe-2S]-[ferredoxin]. Its function is as follows. PsaA and PsaB bind P700, the primary electron donor of photosystem I (PSI), as well as the electron acceptors A0, A1 and FX. PSI is a plastocyanin/cytochrome c6-ferredoxin oxidoreductase, converting photonic excitation into a charge separation, which transfers an electron from the donor P700 chlorophyll pair to the spectroscopically characterized acceptors A0, A1, FX, FA and FB in turn. Oxidized P700 is reduced on the lumenal side of the thylakoid membrane by plastocyanin or cytochrome c6. The sequence is that of Photosystem I P700 chlorophyll a apoprotein A1 from Prochlorococcus marinus (strain MIT 9301).